Reading from the N-terminus, the 382-residue chain is MLEFEMDMDQLAQIKVIGVGGGGSNAVNRMIENGLQGVDFISVNTDAQALHLSKAEVKLQLGGKLTRGLGAGANPEIGKKAAEESREQIEEALQGADMVFITAGMGGGTGTGAAPVIAEVAKEIGALTVGVVTRPFTFEGRKRSTQAAAGIAALKEKVDTLIVIPNDRLLEIVDKNTPMLEAFREADNVLRQGVQGISDLIATPGLINLDFADVKTIMKDKGSALMGIGIATGENRAGEAAKKAISSPLLETSLDGAQGVLMNITGGSNLSLYEVHEAAEIVSAASDAEVNMIFGSVINEDLKDEIVVTVIATGFDDAENRRAQQQSNFNRQAAPKQPLKSKEKEAEKKEPRFTSQPEADDNESLDTLDIPAFLRNRRRKSR.

GTP-binding positions include Gly21–Asn25, Gly108–Gly110, Glu139, Arg143, and Asp187. The disordered stretch occupies residues Arg322–Arg382. The segment covering Lys340–Arg352 has biased composition (basic and acidic residues).

Belongs to the FtsZ family. As to quaternary structure, homodimer. Polymerizes to form a dynamic ring structure in a strictly GTP-dependent manner. Interacts directly with several other division proteins.

The protein resides in the cytoplasm. Functionally, essential cell division protein that forms a contractile ring structure (Z ring) at the future cell division site. The regulation of the ring assembly controls the timing and the location of cell division. One of the functions of the FtsZ ring is to recruit other cell division proteins to the septum to produce a new cell wall between the dividing cells. Binds GTP and shows GTPase activity. The protein is Cell division protein FtsZ of Halalkalibacterium halodurans (strain ATCC BAA-125 / DSM 18197 / FERM 7344 / JCM 9153 / C-125) (Bacillus halodurans).